We begin with the raw amino-acid sequence, 252 residues long: Probable transcriptional regulatory protein THA_1246 (252 aa).

Belongs to the TACO1 family.

The protein localises to the cytoplasm. The sequence is that of Probable transcriptional regulatory protein THA_1246 from Thermosipho africanus (strain TCF52B).